The chain runs to 132 residues: Small ribosomal subunit protein uS11 (132 aa).

Belongs to the universal ribosomal protein uS11 family. As to quaternary structure, part of the 30S ribosomal subunit.

Located on the platform of the 30S subunit. In Caldivirga maquilingensis (strain ATCC 700844 / DSM 13496 / JCM 10307 / IC-167), this protein is Small ribosomal subunit protein uS11.